Reading from the N-terminus, the 556-residue chain is General transcription factor IIF subunit 1 (556 aa).

Disordered regions lie at residues 82–128 (TMTS…PAAA) and 226–499 (SRLQ…PFTE). Residues 84–128 (TSAPNGTNSTGTTPNTTTTTTTTTTTTTTTTTAAGTPGAPNPAAA) are compositionally biased toward low complexity. Residues 245–275 (SGKKSIEELEEAEHRNRNEDPNRYKTTNEEK) show a composition bias toward basic and acidic residues. Composition is skewed to acidic residues over residues 291-338 (GNGE…DVDL) and 378-394 (GDDE…DQDD). Basic and acidic residues-rich tracts occupy residues 415–427 (VKKE…DSKS) and 450–461 (NKSDSSVDNRES). Over residues 469–492 (SSPQAVQPNSPSQQQQQQQQNIDP) the composition is skewed to low complexity.

It belongs to the TFIIF alpha subunit family. As to quaternary structure, heterodimer of an alpha and a beta subunit.

It is found in the nucleus. Functionally, TFIIF is a general transcription initiation factor that binds to RNA polymerase II and helps to recruit it to the initiation complex in collaboration with TFIIB. It promotes transcription elongation. The protein is General transcription factor IIF subunit 1 (gtf2f1) of Dictyostelium discoideum (Social amoeba).